A 191-amino-acid chain; its full sequence is Probable GTP-binding protein EngB (191 aa).

In terms of domain architecture, EngB-type G spans 19–188; that stretch reads NIPEICFMGR…HKKIFELFVE (170 aa). GTP is bound by residues 27 to 34, 53 to 57, 70 to 73, 136 to 139, and 167 to 169; these read GRSNVGKS, GRTQL, DLPG, NKFD, and AST. 2 residues coordinate Mg(2+): Ser-34 and Thr-55.

This sequence belongs to the TRAFAC class TrmE-Era-EngA-EngB-Septin-like GTPase superfamily. EngB GTPase family. The cofactor is Mg(2+).

In terms of biological role, necessary for normal cell division and for the maintenance of normal septation. The polypeptide is Probable GTP-binding protein EngB (Mycoplasma genitalium (strain ATCC 33530 / DSM 19775 / NCTC 10195 / G37) (Mycoplasmoides genitalium)).